Consider the following 174-residue polypeptide: Mitochondrial holo-[acyl-carrier-protein] synthase (174 aa).

Belongs to the P-Pant transferase superfamily. AcpS family.

The protein localises to the mitochondrion. The catalysed reaction is apo-[ACP] + CoA = holo-[ACP] + adenosine 3',5'-bisphosphate + H(+). Functionally, transfers the 4'-phosphopantetheine moiety from coenzyme A to a Ser of mitochondrial acyl-carrier-protein. In Eremothecium gossypii (strain ATCC 10895 / CBS 109.51 / FGSC 9923 / NRRL Y-1056) (Yeast), this protein is Mitochondrial holo-[acyl-carrier-protein] synthase (PPT2).